We begin with the raw amino-acid sequence, 304 residues long: Acetyl-coenzyme A carboxylase carboxyl transferase subunit beta (304 aa).

Residues 23–292 (VWTKCDSCGQ…PNPEAPREGV (270 aa)) enclose the CoA carboxyltransferase N-terminal domain. Zn(2+)-binding residues include Cys-27, Cys-30, Cys-46, and Cys-49. A C4-type zinc finger spans residues 27-49 (CDSCGQVLYRAELERNLEVCPKC). Residues 284–304 (NPEAPREGVVVPPVPDQEPEA) form a disordered region. Positions 295-304 (PPVPDQEPEA) are enriched in pro residues.

The protein belongs to the AccD/PCCB family. Acetyl-CoA carboxylase is a heterohexamer composed of biotin carboxyl carrier protein (AccB), biotin carboxylase (AccC) and two subunits each of ACCase subunit alpha (AccA) and ACCase subunit beta (AccD). Zn(2+) is required as a cofactor.

It is found in the cytoplasm. It carries out the reaction N(6)-carboxybiotinyl-L-lysyl-[protein] + acetyl-CoA = N(6)-biotinyl-L-lysyl-[protein] + malonyl-CoA. It functions in the pathway lipid metabolism; malonyl-CoA biosynthesis; malonyl-CoA from acetyl-CoA: step 1/1. Functionally, component of the acetyl coenzyme A carboxylase (ACC) complex. Biotin carboxylase (BC) catalyzes the carboxylation of biotin on its carrier protein (BCCP) and then the CO(2) group is transferred by the transcarboxylase to acetyl-CoA to form malonyl-CoA. The chain is Acetyl-coenzyme A carboxylase carboxyl transferase subunit beta from Escherichia coli O139:H28 (strain E24377A / ETEC).